A 106-amino-acid polypeptide reads, in one-letter code: MTLEKHAFKMQLNPGMEAEYRRRHDEIWPELVDLLHKSGASDYSIHLDRETNTLFGVLTRPADHTMASLPEHPVVKKWWAYMADIMATNPDNSPVQSDLVTVFHMP.

Tyr20 is a binding site for substrate. His24 acts as the Proton donor in catalysis. Substrate contacts are provided by residues Tyr43 and 78-79 (WW).

This sequence belongs to the rhamnose mutarotase family. In terms of assembly, homodimer.

It localises to the cytoplasm. The catalysed reaction is alpha-L-rhamnose = beta-L-rhamnose. It participates in carbohydrate metabolism; L-rhamnose metabolism. Functionally, involved in the anomeric conversion of L-rhamnose. The chain is L-rhamnose mutarotase from Rhizobium johnstonii (strain DSM 114642 / LMG 32736 / 3841) (Rhizobium leguminosarum bv. viciae).